A 179-amino-acid polypeptide reads, in one-letter code: Probable chorismate pyruvate-lyase (179 aa).

Residues Arg82, Leu120, and Glu165 each contribute to the substrate site.

It belongs to the UbiC family.

Its subcellular location is the cytoplasm. It carries out the reaction chorismate = 4-hydroxybenzoate + pyruvate. It participates in cofactor biosynthesis; ubiquinone biosynthesis. Its function is as follows. Removes the pyruvyl group from chorismate, with concomitant aromatization of the ring, to provide 4-hydroxybenzoate (4HB) for the ubiquinone pathway. The protein is Probable chorismate pyruvate-lyase of Vibrio cholerae serotype O1 (strain ATCC 39315 / El Tor Inaba N16961).